A 410-amino-acid chain; its full sequence is 23S rRNA (uracil(747)-C(5))-methyltransferase (410 aa).

[4Fe-4S] cluster contacts are provided by Cys-61, Cys-67, Cys-70, and Cys-137. S-adenosyl-L-methionine is bound by residues Gln-253, Tyr-279, Glu-300, and Asp-341. Residue Cys-367 is the Nucleophile of the active site.

This sequence belongs to the class I-like SAM-binding methyltransferase superfamily. RNA M5U methyltransferase family.

The catalysed reaction is uridine(747) in 23S rRNA + S-adenosyl-L-methionine = 5-methyluridine(747) in 23S rRNA + S-adenosyl-L-homocysteine + H(+). With respect to regulation, activated by magnesium ions. Catalyzes the formation of 5-methyl-uridine at position equivalent to 747 (m5U747) in 23S rRNA (m5U859 in the P.abyssi numbering). The polypeptide is 23S rRNA (uracil(747)-C(5))-methyltransferase (Pyrococcus abyssi (strain GE5 / Orsay)).